Here is a 72-residue protein sequence, read N- to C-terminus: MAKEDVIEVEGTVIEPLPNAMFRVELENGHKILAHVSGKIRMHFIRILPGDKVTVELSPYDLTRGRITYRYK.

The S1-like domain maps to 2 to 72; sequence AKEDVIEVEG…TRGRITYRYK (71 aa). Tyr-60 is subject to Phosphotyrosine.

This sequence belongs to the IF-1 family. Component of the 30S ribosomal translation pre-initiation complex which assembles on the 30S ribosome in the order IF-2 and IF-3, IF-1 and N-formylmethionyl-tRNA(fMet); mRNA recruitment can occur at any time during PIC assembly.

The protein localises to the cytoplasm. Functionally, one of the essential components for the initiation of protein synthesis. Stabilizes the binding of IF-2 and IF-3 on the 30S subunit to which N-formylmethionyl-tRNA(fMet) subsequently binds. Helps modulate mRNA selection, yielding the 30S pre-initiation complex (PIC). Upon addition of the 50S ribosomal subunit IF-1, IF-2 and IF-3 are released leaving the mature 70S translation initiation complex. The sequence is that of Translation initiation factor IF-1 from Halalkalibacterium halodurans (strain ATCC BAA-125 / DSM 18197 / FERM 7344 / JCM 9153 / C-125) (Bacillus halodurans).